The following is a 148-amino-acid chain: uncharacterized protein (148 aa).

Transmembrane regions (helical) follow at residues 16–36 (IVGA…SIIL) and 41–61 (LSFS…AYIF).

This sequence to M.jannaschii MJ0696.

It is found in the cell membrane. This is an uncharacterized protein from Methanocaldococcus jannaschii (strain ATCC 43067 / DSM 2661 / JAL-1 / JCM 10045 / NBRC 100440) (Methanococcus jannaschii).